The primary structure comprises 564 residues: Potassium-transporting ATPase potassium-binding subunit (564 aa).

The next 10 membrane-spanning stretches (helical) occupy residues 4–24, 67–87, 135–155, 179–199, 258–278, 286–306, 382–402, 420–440, 487–507, and 534–554; these read YDYL…PWLG, TLAL…VLLL, IGLT…LVAL, LYGL…QGVP, FEVA…GHYV, AIIA…LWSE, AGLY…GLMI, LLVA…AIAA, VMIG…VLAL, and LLLL…LALG.

The protein belongs to the KdpA family. In terms of assembly, the system is composed of three essential subunits: KdpA, KdpB and KdpC.

The protein localises to the cell inner membrane. Part of the high-affinity ATP-driven potassium transport (or Kdp) system, which catalyzes the hydrolysis of ATP coupled with the electrogenic transport of potassium into the cytoplasm. This subunit binds the periplasmic potassium ions and delivers the ions to the membrane domain of KdpB through an intramembrane tunnel. This chain is Potassium-transporting ATPase potassium-binding subunit, found in Pseudomonas entomophila (strain L48).